Reading from the N-terminus, the 103-residue chain is MYAVLATGGKQYRVQEGDVIYVEKLDAEVDSTVELTEVLAVANGEGIKVGAPVVEGAKVTAKVLAQGKQKKVIVFKYKAKKDYRRKNGHRQPYTKLVIEKIEA.

Belongs to the bacterial ribosomal protein bL21 family. In terms of assembly, part of the 50S ribosomal subunit. Contacts protein L20.

This protein binds to 23S rRNA in the presence of protein L20. This Clostridium botulinum (strain Alaska E43 / Type E3) protein is Large ribosomal subunit protein bL21.